Here is a 507-residue protein sequence, read N- to C-terminus: E3 ubiquitin-protein ligase makorin-3 (507 aa).

A compositionally biased stretch (low complexity) spans 1-21 (MEEPAAPSEAHEAAGAQAGAE). Disordered regions lie at residues 1–48 (MEEP…DSAL) and 69–89 (RGGL…PLPS). Residues 95–122 (WTKQIICRYYIHGQCKEGENCRYSHDLS) form a C3H1-type 1 zinc finger. Positions 126–149 (MATEGGVSPPGASAGGGPSTAAHI) are disordered. The segment at 238–265 (GSGLRFCYYASRGVCFRGESCMYLHGDI) adopts a C3H1-type 2 zinc-finger fold. Residues 266–293 (CDMCGLQTLHPMDAAQREEHMRACIEAH) are makorin-type Cys-His. The RING-type zinc finger occupies 311–365 (CGICMEVVYEKANPNDRRFGILSNCNHSFCIRCIRRWRSARQFENRIVKSCPQCR). The C3H1-type 3 zinc finger occupies 394–423 (AMSNKACRYFAEGRGNCPFGDTCFYKHEYP).

In terms of tissue distribution, ubiquitous.

It localises to the nucleus. It carries out the reaction S-ubiquitinyl-[E2 ubiquitin-conjugating enzyme]-L-cysteine + [acceptor protein]-L-lysine = [E2 ubiquitin-conjugating enzyme]-L-cysteine + N(6)-ubiquitinyl-[acceptor protein]-L-lysine.. It participates in protein modification; protein ubiquitination. E3 ubiquitin ligase catalyzing the covalent attachment of ubiquitin moieties onto substrate proteins. Acts as a key developmental timer that helps ensure puberty begins at the appropriate age, by inhibiting premature activation of the reproductive hormone cascade. Epigenetically regulates GNRH1 transcription by disrupting the binding of methyl-DNA binding protein 3/MBD3 to the promoter of GNRH1. Mechanistically, mediates the non-proteolytic ubiquitination of MBD3 at multiple sites with 'Lys27' ubiquitin linkages and thereby regulates the methylation status of the genome, including GNRH1 promoter. Modulates the stability and translation of GNRH1 mRNA by mediating the non-proteolytic ubiquitination of PABP family members PABPC1, PABPC3 and PABPC4 at multiple sites. Also participates in the maintenance of genomic and epigenomic stability by regulating the abundance of APEX2 via 'Lys-48'-linked ubiquitination. This chain is E3 ubiquitin-protein ligase makorin-3 (MKRN3), found in Homo sapiens (Human).